Reading from the N-terminus, the 303-residue chain is Recombination-associated protein RdgC (303 aa).

Belongs to the RdgC family.

The protein localises to the cytoplasm. It is found in the nucleoid. May be involved in recombination. This Enterobacter sp. (strain 638) protein is Recombination-associated protein RdgC.